A 264-amino-acid polypeptide reads, in one-letter code: Small ribosomal subunit protein eS1A (264 aa).

Residues 233 to 264 (GEGGGTGKPAGDETGAKVERADGYEPPVQESV) form a disordered region. Over residues 242–255 (AGDETGAKVERADG) the composition is skewed to basic and acidic residues.

The protein belongs to the eukaryotic ribosomal protein eS1 family. Component of the small ribosomal subunit. Mature ribosomes consist of a small (40S) and a large (60S) subunit. The 40S subunit contains about 33 different proteins and 1 molecule of RNA (18S). The 60S subunit contains about 49 different proteins and 3 molecules of RNA (28S, 5.8S and 5S). Part of the small subunit (SSU) processome, composed of more than 70 proteins and the RNA chaperone small nucleolar RNA (snoRNA) U3.

It is found in the cytoplasm. The protein localises to the nucleus. The protein resides in the nucleolus. Functionally, component of the small ribosomal subunit. The ribosome is a large ribonucleoprotein complex responsible for the synthesis of proteins in the cell. Part of the small subunit (SSU) processome, first precursor of the small eukaryotic ribosomal subunit. During the assembly of the SSU processome in the nucleolus, many ribosome biogenesis factors, an RNA chaperone and ribosomal proteins associate with the nascent pre-rRNA and work in concert to generate RNA folding, modifications, rearrangements and cleavage as well as targeted degradation of pre-ribosomal RNA by the RNA exosome. May play a role during erythropoiesis. The polypeptide is Small ribosomal subunit protein eS1A (rps3a-a) (Xenopus laevis (African clawed frog)).